A 415-amino-acid chain; its full sequence is Fructose-like permease IIC component 1 (415 aa).

Residues 1–46 lie on the Cytoplasmic side of the membrane; sequence MAIKKRSATVVPGASGAAAAVKNPQASKTSFWGELPQHVMSGISRM. Positions 35-410 constitute a PTS EIIC type-2 domain; sequence LPQHVMSGIS…RLMMFRKGKL (376 aa). The chain crosses the membrane as a helical span at residues 47-67; sequence VPTLIMGGVILAFSQLIAYSW. Residues 68–101 lie on the Periplasmic side of the membrane; it reads LKIPAEIGIMDALNSGKFSGFDLSLLKFAWLSQS. The helical transmembrane segment at 102–122 threads the bilayer; it reads FGGVLFGFAIPMFAAFVANSI. Topologically, residues 123-126 are cytoplasmic; that stretch reads GGKL. A helical transmembrane segment spans residues 127–147; sequence AFPAGFIGGLMSTQPTQLLNF. Residues 148 to 157 are Periplasmic-facing; it reads DPSTMQWATS. A helical transmembrane segment spans residues 158 to 178; the sequence is SPVPSTFIGALIISIVAGYLV. Topologically, residues 179–197 are cytoplasmic; the sequence is KWMNQKIQLPDFLLAFKTT. The chain crosses the membrane as a helical span at residues 198–218; that stretch reads FLLPILSAIFVMLAMYYVITP. The Periplasmic segment spans residues 219-237; it reads FGGWINGGIRTVLTAAGEK. The helical transmembrane segment at 238–258 threads the bilayer; it reads GALMYAMGIAAATAIDLGGPI. Over 259–276 the chain is Cytoplasmic; sequence NKAAGFVAFSFTTDHVLP. Residues 277–297 traverse the membrane as a helical segment; sequence VTARSIAIVIPPIGLGLATII. The Periplasmic portion of the chain corresponds to 298–318; that stretch reads DRRLTGKRLFNAQLYPQGKTA. A helical transmembrane segment spans residues 319–339; that stretch reads MFLAFMGISEGAIPFALESPI. The Cytoplasmic portion of the chain corresponds to 340 to 341; it reads TA. Residues 342–362 traverse the membrane as a helical segment; sequence IPSYMVGAIVGSTAAVWLGAV. The Periplasmic portion of the chain corresponds to 363–378; it reads QWFPESAIWAWPLVTN. The chain crosses the membrane as a helical span at residues 379-399; sequence LGVYMAGIALGAVITALMVVF. Topologically, residues 400–415 are cytoplasmic; that stretch reads LRLMMFRKGKLLIDSL.

Its subcellular location is the cell inner membrane. Its function is as follows. The phosphoenolpyruvate-dependent sugar phosphotransferase system (PTS), a major carbohydrate active -transport system, catalyzes the phosphorylation of incoming sugar substrates concomitant with their translocation across the cell membrane. The polypeptide is Fructose-like permease IIC component 1 (fryC) (Escherichia coli (strain K12)).